The primary structure comprises 624 residues: (-)-beta-phellandrene synthase 2, chloroplastic (624 aa).

The transit peptide at 1–47 (MALVSVAPLVSMRRSLFSSPYELKSIDKTIPNLVMCRKRMLGRPSIR) directs the protein to the chloroplast. Asp375, Asp379, and Asp527 together coordinate Mg(2+). The DDXXD motif motif lies at 375 to 379 (DDIYD).

The protein belongs to the terpene synthase family. Tpsd subfamily. It depends on Mg(2+) as a cofactor. The cofactor is Mn(2+).

It is found in the plastid. The protein resides in the chloroplast. The enzyme catalyses (2E)-geranyl diphosphate = (-)-beta-phellandrene + diphosphate. It participates in terpene metabolism; oleoresin biosynthesis. The protein operates within secondary metabolite biosynthesis; terpenoid biosynthesis. In terms of biological role, monoterpene synthase (TPS) involved in the biosynthesis of monoterpene natural products included in conifer oleoresin secretions and volatile emissions; these compounds contribute to biotic and abiotic stress defense against herbivores and pathogens. Catalyzes the conversion of (2E)-geranyl diphosphate (GPP) to (-)-beta-phellandrene. The chain is (-)-beta-phellandrene synthase 2, chloroplastic from Pinus contorta (Shore pine).